Consider the following 492-residue polypeptide: 3-octaprenyl-4-hydroxybenzoate carboxy-lyase (492 aa).

Position 177 (Asn-177) interacts with Mn(2+). Residues 180–182, 194–196, and 199–200 contribute to the prenylated FMN site; these read IYR, RWL, and RG. Glu-243 contacts Mn(2+). The Proton donor role is filled by Asp-292.

Belongs to the UbiD family. As to quaternary structure, homohexamer. It depends on prenylated FMN as a cofactor. Mn(2+) is required as a cofactor.

The protein localises to the cell membrane. The catalysed reaction is a 4-hydroxy-3-(all-trans-polyprenyl)benzoate + H(+) = a 2-(all-trans-polyprenyl)phenol + CO2. Its pathway is cofactor biosynthesis; ubiquinone biosynthesis. Functionally, catalyzes the decarboxylation of 3-octaprenyl-4-hydroxy benzoate to 2-octaprenylphenol, an intermediate step in ubiquinone biosynthesis. The sequence is that of 3-octaprenyl-4-hydroxybenzoate carboxy-lyase from Neisseria meningitidis serogroup A / serotype 4A (strain DSM 15465 / Z2491).